A 162-amino-acid polypeptide reads, in one-letter code: Phosphopantetheine adenylyltransferase (162 aa).

A substrate-binding site is contributed by Ser11. Residues 11 to 12 (SF) and His19 each bind ATP. Substrate-binding residues include Lys43, Val76, and Arg90. Residues 91–93 (GLR), Glu101, and 126–132 (HLYISSS) each bind ATP.

Belongs to the bacterial CoaD family. In terms of assembly, homohexamer. Mg(2+) is required as a cofactor.

It is found in the cytoplasm. It catalyses the reaction (R)-4'-phosphopantetheine + ATP + H(+) = 3'-dephospho-CoA + diphosphate. The protein operates within cofactor biosynthesis; coenzyme A biosynthesis; CoA from (R)-pantothenate: step 4/5. Its function is as follows. Reversibly transfers an adenylyl group from ATP to 4'-phosphopantetheine, yielding dephospho-CoA (dPCoA) and pyrophosphate. This chain is Phosphopantetheine adenylyltransferase, found in Streptococcus pneumoniae (strain ATCC 700669 / Spain 23F-1).